A 294-amino-acid polypeptide reads, in one-letter code: uncharacterized protein (294 aa).

This is an uncharacterized protein from Methanocaldococcus jannaschii (strain ATCC 43067 / DSM 2661 / JAL-1 / JCM 10045 / NBRC 100440) (Methanococcus jannaschii).